The following is a 158-amino-acid chain: RNA pyrophosphohydrolase (158 aa).

One can recognise a Nudix hydrolase domain in the interval 6–149 (GYRLNVGIVL…KRHVYRKVMK (144 aa)). Positions 38-59 (GGINIGETPEQAMYRELFEEIG) match the Nudix box motif.

The protein belongs to the Nudix hydrolase family. RppH subfamily. A divalent metal cation is required as a cofactor.

Functionally, accelerates the degradation of transcripts by removing pyrophosphate from the 5'-end of triphosphorylated RNA, leading to a more labile monophosphorylated state that can stimulate subsequent ribonuclease cleavage. The protein is RNA pyrophosphohydrolase of Blochmanniella floridana.